The sequence spans 623 residues: MDSSLFSLKNSFGGFNDEELLRVQKIIEDLELTESIVSKEWVTFALQKKIAEDYSKHLDPFKVFLKKNIKKLKVQKTTEQIKEVAEEDPKMFENVEIEDIIFDTDSLVDESEIPKIKDEPSSSVDVSTARNKNNHNNNNNNNPSLPNKSMFKPTKQEMTNDNIKKVVIADDIGDFDFTTANQPIKQSNPTQLLNYKERKNIGGISYSMNNNEELKTDLSLREKKSCDLKGAGEEFYPIKYHRDTLEQRTKILKESVQSNNYTFPVSLDCQDDESIVRSVGRVWMYDQETILSKRFYLLGNERDSSSSGGSSGSASIFSLENNIPDYSMFSGQVVMAESKKIAGSHFYYTNKLYTPNPLPFFSQRKECGDINVMIASGPFDLQKSTPDYTPLDDLCNVVSNKKPHILFLMGPFIDESNVHIKKYSETFSELFNNLMKKLNDNIPSTTKVLIVPSLNDVDHEYIFPQPPYVPSVNLNSNILFVPNPFTLIINESFTIGITSSDIYNNLVSKAHFKNKHTPEDIFNMIINQNNYYPMHPAQAPISMRYLQHLNFPGFTPDILVVPKNSPIAAISNDVLCLGVPPIVGNKSTFGSYAELTVTKSKQSLAFDNNIPVSKRTIVNFKNI.

Residues 113–151 (IPKIKDEPSSSVDVSTARNKNNHNNNNNNNPSLPNKSMF) form a disordered region. Over residues 121 to 130 (SSSVDVSTAR) the composition is skewed to polar residues.

Belongs to the DNA polymerase alpha subunit B family. As to quaternary structure, DNA polymerase alpha:primase is a four subunit enzyme complex, which is assembled throughout the cell cycle, and consists of the two DNA polymerase subunits A and B, and the DNA primase large and small subunits. Subunit B binds to subunit A.

It is found in the nucleus. May play an essential role at the early stage of chromosomal DNA replication by coupling the polymerase alpha/primase complex to the cellular replication machinery. This chain is DNA polymerase alpha subunit B (polA2), found in Dictyostelium discoideum (Social amoeba).